Reading from the N-terminus, the 287-residue chain is Methylamine utilization ferredoxin-type protein MauN (287 aa).

4Fe-4S ferredoxin-type domains are found at residues 218 to 248 (RVAAARREGCTNCGACFQICTEPHVITPALK) and 251 to 280 (GSTLILSGDCVNCGSCIDACPVNVFEMTMR). Positions 227, 230, 233, 237, 260, 263, 266, and 270 each coordinate [4Fe-4S] cluster.

It functions in the pathway one-carbon metabolism; methylamine degradation. Involved in electron transfer. The polypeptide is Methylamine utilization ferredoxin-type protein MauN (mauN) (Methylorubrum extorquens (strain ATCC 14718 / DSM 1338 / JCM 2805 / NCIMB 9133 / AM1) (Methylobacterium extorquens)).